An 89-amino-acid chain; its full sequence is UPF0335 protein RPC_3979 (89 aa).

This sequence belongs to the UPF0335 family.

The protein is UPF0335 protein RPC_3979 of Rhodopseudomonas palustris (strain BisB18).